The sequence spans 226 residues: MNENLFASFAAPSMMGLPIVVLIVMFPSILFPTPSRLINNRLISIQQWLIQLTSKQMLAIHNQKGRTWALMLMSLILFIGSTNLLGLLPHSFTPTTQLSMNLGMAIPLWAGTVITGFRYKTKASLAHFLPQGTPLPLIPMLVVIETISLFIQPMALAVRLTANITAGHLLIHLIGGATLALINISATTAFITFIILILLTILEFAVALIQAYVFTLLVSLYLHDNT.

The next 6 membrane-spanning stretches (helical) occupy residues 11–31 (APSM…SILF), 68–88 (WALM…LGLL), 97–117 (QLSM…ITGF), 138–158 (IPML…ALAV), 164–184 (ITAG…LINI), and 189–209 (AFIT…VALI).

Belongs to the ATPase A chain family. As to quaternary structure, component of the ATP synthase complex composed at least of ATP5F1A/subunit alpha, ATP5F1B/subunit beta, ATP5MC1/subunit c (homooctomer), MT-ATP6/subunit a, MT-ATP8/subunit 8, ATP5ME/subunit e, ATP5MF/subunit f, ATP5MG/subunit g, ATP5MK/subunit k, ATP5MJ/subunit j, ATP5F1C/subunit gamma, ATP5F1D/subunit delta, ATP5F1E/subunit epsilon, ATP5PF/subunit F6, ATP5PB/subunit b, ATP5PD/subunit d, ATP5PO/subunit OSCP. ATP synthase complex consists of a soluble F(1) head domain (subunits alpha(3) and beta(3)) - the catalytic core - and a membrane F(0) domain - the membrane proton channel (subunits c, a, 8, e, f, g, k and j). These two domains are linked by a central stalk (subunits gamma, delta, and epsilon) rotating inside the F1 region and a stationary peripheral stalk (subunits F6, b, d, and OSCP). Interacts with DNAJC30; interaction is direct.

It is found in the mitochondrion inner membrane. The enzyme catalyses H(+)(in) = H(+)(out). Functionally, subunit a, of the mitochondrial membrane ATP synthase complex (F(1)F(0) ATP synthase or Complex V) that produces ATP from ADP in the presence of a proton gradient across the membrane which is generated by electron transport complexes of the respiratory chain. ATP synthase complex consist of a soluble F(1) head domain - the catalytic core - and a membrane F(1) domain - the membrane proton channel. These two domains are linked by a central stalk rotating inside the F(1) region and a stationary peripheral stalk. During catalysis, ATP synthesis in the catalytic domain of F(1) is coupled via a rotary mechanism of the central stalk subunits to proton translocation. With the subunit c (ATP5MC1), forms the proton-conducting channel in the F(0) domain, that contains two crucial half-channels (inlet and outlet) that facilitate proton movement from the mitochondrial intermembrane space (IMS) into the matrix. Protons are taken up via the inlet half-channel and released through the outlet half-channel, following a Grotthuss mechanism. This chain is ATP synthase F(0) complex subunit a, found in Canis lupus familiaris (Dog).